The primary structure comprises 366 residues: Class I histocompatibility antigen, Gogo-C*0201 alpha chain (366 aa).

Residues 1-24 (MRVMAPRTLILPLSGALALTETWA) form the signal peptide. The interval 25–114 (GSHSMRYFYT…LRGYYNQSED (90 aa)) is alpha-1. The Extracellular portion of the chain corresponds to 25-308 (GSHSMRYFYT…EPSSQPTIPI (284 aa)). The N-linked (GlcNAc...) asparagine glycan is linked to asparagine 110. An alpha-2 region spans residues 115–206 (GSHTLQSMYG…ENGKETLQRA (92 aa)). Cystine bridges form between cysteine 125/cysteine 188 and cysteine 227/cysteine 283. The interval 207 to 298 (EPPKTHVTHH…GLPEPLTLRW (92 aa)) is alpha-3. Residues 209-297 (PKTHVTHHPL…EGLPEPLTLR (89 aa)) enclose the Ig-like C1-type domain. The connecting peptide stretch occupies residues 299 to 308 (EPSSQPTIPI). The chain crosses the membrane as a helical span at residues 309–333 (VGIVVGLAVLVVLAVLGAVVTAMMC). Over 334–366 (RRKSSGGKGGSCSQAACSNSAQGSDESLITCKA) the chain is Cytoplasmic.

The protein belongs to the MHC class I family. As to quaternary structure, heterodimer of an alpha chain and a beta chain (beta-2-microglobulin).

It is found in the membrane. Involved in the presentation of foreign antigens to the immune system. The sequence is that of Class I histocompatibility antigen, Gogo-C*0201 alpha chain from Gorilla gorilla gorilla (Western lowland gorilla).